We begin with the raw amino-acid sequence, 199 residues long: Peroxiredoxin 2 (199 aa).

Residues 8-166 (AFIGQPAPNF…TLRLIQAFQF (159 aa)) enclose the Thioredoxin domain. The Cysteine sulfenic acid (-SOH) intermediate role is filled by Cys53.

Belongs to the peroxiredoxin family. AhpC/Prx1 subfamily. In terms of assembly, homodimer; disulfide-linked, upon oxidation.

The enzyme catalyses a hydroperoxide + [thioredoxin]-dithiol = an alcohol + [thioredoxin]-disulfide + H2O. Its function is as follows. Thiol-specific peroxidase that catalyzes the reduction of hydrogen peroxide and organic hydroperoxides to water and alcohols, respectively. Plays a role in cell protection against oxidative stress by detoxifying peroxides and as sensor of hydrogen peroxide-mediated signaling events. This is Peroxiredoxin 2 (tsa-2) from Brugia malayi (Filarial nematode worm).